Here is a 411-residue protein sequence, read N- to C-terminus: Secretion apparatus protein BsaZ (411 aa).

Transmembrane regions (helical) follow at residues 28-48 (IVALIVIATGALAAPALVDLT), 80-100 (IAAPFVLLCAAAGALPSLVQS), 137-157 (ALLYVGVFALTVRVFADLYHA), and 175-195 (IVLTVRLVLLFLLCALPVLIL). The interval 341–411 (AANRGGPPPE…APARTGDQNA (71 aa)) is disordered. Low complexity predominate over residues 370 to 404 (DACADNAFPDDAPPGAAAPNAGSPDGPAPDGGAPA).

The protein belongs to the type III secretion exporter family.

It is found in the cell membrane. Its function is as follows. Part of the bsa type III secretion system, is involved in the intracellular replication of invading bacteria inside the host cell. Probably necessary for the lysis of the vacuole membrane and escape into the host cell cytoplasm. The polypeptide is Secretion apparatus protein BsaZ (bsaZ) (Burkholderia pseudomallei (strain K96243)).